Consider the following 361-residue polypeptide: Phosphoserine aminotransferase (361 aa).

Arg-43 contacts L-glutamate. Residues 77–78 (AS), Trp-103, Thr-153, Asp-173, and Gln-196 each bind pyridoxal 5'-phosphate. Position 197 is an N6-(pyridoxal phosphate)lysine (Lys-197). Residue 238-239 (NT) participates in pyridoxal 5'-phosphate binding.

It belongs to the class-V pyridoxal-phosphate-dependent aminotransferase family. SerC subfamily. Homodimer. Pyridoxal 5'-phosphate serves as cofactor.

The protein localises to the cytoplasm. It catalyses the reaction O-phospho-L-serine + 2-oxoglutarate = 3-phosphooxypyruvate + L-glutamate. The catalysed reaction is 4-(phosphooxy)-L-threonine + 2-oxoglutarate = (R)-3-hydroxy-2-oxo-4-phosphooxybutanoate + L-glutamate. The protein operates within amino-acid biosynthesis; L-serine biosynthesis; L-serine from 3-phospho-D-glycerate: step 2/3. It functions in the pathway cofactor biosynthesis; pyridoxine 5'-phosphate biosynthesis; pyridoxine 5'-phosphate from D-erythrose 4-phosphate: step 3/5. Its function is as follows. Catalyzes the reversible conversion of 3-phosphohydroxypyruvate to phosphoserine and of 3-hydroxy-2-oxo-4-phosphonooxybutanoate to phosphohydroxythreonine. The polypeptide is Phosphoserine aminotransferase (Azotobacter vinelandii (strain DJ / ATCC BAA-1303)).